The sequence spans 264 residues: Phosphatidylglycerol--prolipoprotein diacylglyceryl transferase (264 aa).

4 consecutive transmembrane segments (helical) span residues 17 to 37 (LAIHWYGLMYLLAFAFVYLLG), 57 to 77 (LIFYSVLGVVLGGRLGYVLFY), 89 to 109 (IAFLWEGGMSFHGGLIGVILV), and 118 to 138 (GVSFFTISDFIAPLIPLGLGA). Arg-140 contacts a 1,2-diacyl-sn-glycero-3-phospho-(1'-sn-glycerol). 3 helical membrane passes run 173–193 (PSQLYELGLEGLVLFALLWWF), 201–221 (GQVSAMFLMGYGAFRFLVEFT), and 237–257 (MGQWLSLPMFLGGLVLFVLTA).

This sequence belongs to the Lgt family.

It is found in the cell inner membrane. The catalysed reaction is L-cysteinyl-[prolipoprotein] + a 1,2-diacyl-sn-glycero-3-phospho-(1'-sn-glycerol) = an S-1,2-diacyl-sn-glyceryl-L-cysteinyl-[prolipoprotein] + sn-glycerol 1-phosphate + H(+). It participates in protein modification; lipoprotein biosynthesis (diacylglyceryl transfer). Its function is as follows. Catalyzes the transfer of the diacylglyceryl group from phosphatidylglycerol to the sulfhydryl group of the N-terminal cysteine of a prolipoprotein, the first step in the formation of mature lipoproteins. In Bordetella avium (strain 197N), this protein is Phosphatidylglycerol--prolipoprotein diacylglyceryl transferase.